A 268-amino-acid chain; its full sequence is Phosphonates import ATP-binding protein PhnC (268 aa).

Positions 11-254 constitute an ABC transporter domain; the sequence is LHAEAVTKRF…EVMAIYQRAE (244 aa). 43–50 provides a ligand contact to ATP; sequence GLSGSGKS.

The protein belongs to the ABC transporter superfamily. Phosphonates importer (TC 3.A.1.9.1) family. As to quaternary structure, the complex is composed of two ATP-binding proteins (PhnC), two transmembrane proteins (PhnE) and a solute-binding protein (PhnD).

The protein resides in the cell membrane. The enzyme catalyses phosphonate(out) + ATP + H2O = phosphonate(in) + ADP + phosphate + H(+). Functionally, part of the ABC transporter complex PhnCDE involved in phosphonates import. Responsible for energy coupling to the transport system. The polypeptide is Phosphonates import ATP-binding protein PhnC (Nocardia farcinica (strain IFM 10152)).